The chain runs to 447 residues: Dihydroorotase (447 aa).

Zn(2+) is bound by residues His-81 and His-83. Substrate is bound by residues 83–85 and Asn-115; that span reads HFR. Zn(2+) contacts are provided by Asp-171, His-198, and His-252. Residue Asn-298 coordinates substrate. Residue Asp-325 coordinates Zn(2+). Asp-325 is a catalytic residue. Substrate is bound by residues His-329 and 343 to 344; that span reads FG.

Belongs to the metallo-dependent hydrolases superfamily. DHOase family. Class I DHOase subfamily. Requires Zn(2+) as cofactor.

The catalysed reaction is (S)-dihydroorotate + H2O = N-carbamoyl-L-aspartate + H(+). It functions in the pathway pyrimidine metabolism; UMP biosynthesis via de novo pathway; (S)-dihydroorotate from bicarbonate: step 3/3. Catalyzes the reversible cyclization of carbamoyl aspartate to dihydroorotate. This chain is Dihydroorotase, found in Ehrlichia canis (strain Jake).